Consider the following 175-residue polypeptide: MAAVSISVSLRQAMLGRRAMATAAVSVCRVPSRLLSTSTWKLADNQTRDTQLITVDEKLDITTLTGVPEEHIKTRKVRIFVPARNNMQSGVNNTKKWKMEFDTRERWENPLMGWASTADPLSNMVLTFSAKEDAIAFAEKNGWSYDVEEKKVPKPKSKSYGANFSWNKRTRVSTK.

The N-terminal 42 residues, 1–42 (MAAVSISVSLRQAMLGRRAMATAAVSVCRVPSRLLSTSTWKL), are a transit peptide targeting the mitochondrion. Ser173 bears the Phosphoserine mark.

The protein belongs to the complex I NDUFS4 subunit family. This is a component of the iron-sulfur (IP) fragment of the enzyme. Interacts with BCAP31 and TOMM40; the interaction mediates its translocation to the mitochondria; the interaction with BCAP31 is direct.

It localises to the mitochondrion inner membrane. In terms of biological role, accessory subunit of the mitochondrial membrane respiratory chain NADH dehydrogenase (Complex I), that is believed not to be involved in catalysis. Complex I functions in the transfer of electrons from NADH to the respiratory chain. The immediate electron acceptor for the enzyme is believed to be ubiquinone. This chain is NADH dehydrogenase [ubiquinone] iron-sulfur protein 4, mitochondrial (Ndufs4), found in Mus musculus (Mouse).